The chain runs to 307 residues: Formate hydrogenlyase subunit 4 (307 aa).

Residues Met-1–Ser-2 lie on the Periplasmic side of the membrane. A helical membrane pass occupies residues Val-3–Ile-23. At Thr-24–Thr-67 the chain is on the cytoplasmic side. A helical membrane pass occupies residues Pro-68–Gly-88. The Periplasmic segment spans residues Ser-89–Gln-93. A helical transmembrane segment spans residues Leu-94 to Ser-114. Residues Gly-115–Ala-131 lie on the Cytoplasmic side of the membrane. Residues Met-132 to Ala-152 traverse the membrane as a helical segment. The Periplasmic segment spans residues Gly-153 to Trp-167. The helical transmembrane segment at Pro-168 to Ile-188 threads the bilayer. At Glu-189 to Lys-221 the chain is on the cytoplasmic side. Residues Trp-222 to Trp-242 form a helical membrane-spanning segment. At Gly-243–Leu-253 the chain is on the periplasmic side. The chain crosses the membrane as a helical span at residues Leu-254–Phe-274. The Cytoplasmic portion of the chain corresponds to Glu-275–Asp-284. A helical membrane pass occupies residues Ile-285–Leu-305. Residues Ala-306–Ala-307 are Periplasmic-facing.

This sequence belongs to the complex I subunit 1 family. FHL comprises of a formate dehydrogenase, unidentified electron carriers and a hydrogenase (isoenzyme 3). In this non-energy conserving pathway molecular hydrogen and carbodioxide from formate are released.

It is found in the cell inner membrane. This chain is Formate hydrogenlyase subunit 4 (hycD), found in Escherichia coli (strain K12).